Here is a 461-residue protein sequence, read N- to C-terminus: Vitamin K-dependent protein C (461 aa).

The N-terminal stretch at 1 to 18 (MWQFRIFLLFASTWGISG) is a signal peptide. Residues 19–41 (VSAHPDPVFSSSEGAHQVLRVRR) constitute a propeptide that is removed on maturation. The Gla domain occupies 42–87 (ANSFLEEVRAGSLERECMEEICDFEEAQEIFQNVEDTLAFWIKYFD). A 4-carboxyglutamate mark is found at Glu47, Glu48, Glu55, Glu57, Glu60, Glu61, Glu66, Glu67, Glu70, and Glu76. Cys58 and Cys63 are joined by a disulfide. Disulfide bonds link Cys91–Cys110, Cys100–Cys105, Cys104–Cys119, Cys121–Cys130, Cys139–Cys150, Cys146–Cys159, Cys161–Cys174, Cys182–Cys320, and Cys239–Cys255. EGF-like domains follow at residues 96 to 131 (LDHQ…RFCQ) and 135 to 175 (GFQD…MHCR). Asp112 carries the (3R)-3-hydroxyaspartate modification. The region spanning 213–450 (IVNGTLTKQG…YLKWIHSYIG (238 aa)) is the Peptidase S1 domain. N-linked (GlcNAc...) asparagine glycosylation occurs at Asn215. Catalysis depends on His254, which acts as the Charge relay system. Asn291 carries an N-linked (GlcNAc...) asparagine glycan. Asp300 acts as the Charge relay system in catalysis. Asn355 carries an N-linked (GlcNAc...) asparagine glycan. 2 disulfides stabilise this stretch: Cys373/Cys387 and Cys398/Cys426. The active-site Charge relay system is the Ser402.

This sequence belongs to the peptidase S1 family. In terms of assembly, synthesized as a single chain precursor, which is cleaved into a light chain and a heavy chain held together by a disulfide bond. The enzyme is then activated by thrombin, which cleaves a tetradecapeptide from the amino end of the heavy chain; this reaction, which occurs at the surface of endothelial cells, is strongly promoted by thrombomodulin. In terms of processing, the vitamin K-dependent, enzymatic carboxylation of some Glu residues allows the modified protein to bind calcium. Post-translationally, the iron and 2-oxoglutarate dependent 3-hydroxylation of aspartate and asparagine is (R) stereospecific within EGF domains. As to expression, plasma; synthesized in the liver.

Its subcellular location is the secreted. It is found in the golgi apparatus. The protein localises to the endoplasmic reticulum. The enzyme catalyses Degradation of blood coagulation factors Va and VIIIa.. Its function is as follows. Protein C is a vitamin K-dependent serine protease that regulates blood coagulation by inactivating factors Va and VIIIa in the presence of calcium ions and phospholipids. Exerts a protective effect on the endothelial cell barrier function. This Rattus norvegicus (Rat) protein is Vitamin K-dependent protein C (Proc).